The following is a 325-amino-acid chain: DNA-directed RNA polymerase subunit alpha (325 aa).

The alpha N-terminal domain (alpha-NTD) stretch occupies residues M1–E231. The tract at residues I246 to K325 is alpha C-terminal domain (alpha-CTD).

It belongs to the RNA polymerase alpha chain family. In terms of assembly, homodimer. The RNAP catalytic core consists of 2 alpha, 1 beta, 1 beta' and 1 omega subunit. When a sigma factor is associated with the core the holoenzyme is formed, which can initiate transcription.

It carries out the reaction RNA(n) + a ribonucleoside 5'-triphosphate = RNA(n+1) + diphosphate. Functionally, DNA-dependent RNA polymerase catalyzes the transcription of DNA into RNA using the four ribonucleoside triphosphates as substrates. The polypeptide is DNA-directed RNA polymerase subunit alpha (Burkholderia thailandensis (strain ATCC 700388 / DSM 13276 / CCUG 48851 / CIP 106301 / E264)).